The chain runs to 217 residues: Ribosomal RNA small subunit methyltransferase G (217 aa).

S-adenosyl-L-methionine-binding positions include Gly-79, Leu-84, 130 to 131 (IE), and Arg-145.

Belongs to the methyltransferase superfamily. RNA methyltransferase RsmG family.

It is found in the cytoplasm. It catalyses the reaction guanosine(527) in 16S rRNA + S-adenosyl-L-methionine = N(7)-methylguanosine(527) in 16S rRNA + S-adenosyl-L-homocysteine. Specifically methylates the N7 position of guanine in position 527 of 16S rRNA. This is Ribosomal RNA small subunit methyltransferase G from Hahella chejuensis (strain KCTC 2396).